The sequence spans 86 residues: Large ribosomal subunit protein bL31 (86 aa).

Positions 65–86 (YGMGSADSATSKETKESKKSDK) are disordered. The span at 74-86 (TSKETKESKKSDK) shows a compositional bias: basic and acidic residues.

It belongs to the bacterial ribosomal protein bL31 family. Type A subfamily. As to quaternary structure, part of the 50S ribosomal subunit.

Functionally, binds the 23S rRNA. This chain is Large ribosomal subunit protein bL31, found in Prochlorococcus marinus subsp. pastoris (strain CCMP1986 / NIES-2087 / MED4).